The primary structure comprises 264 residues: Movement protein (264 aa).

The interval 221–264 (YRSRSQSVSGRGKRHSKPPNRRLDSASEESSSVSFDDGLQSDHT) is disordered. Positions 231 to 240 (RGKRHSKPPN) are enriched in basic residues.

The protein belongs to the tobamovirus movement protein family.

The protein localises to the host cytoplasm. It is found in the host cytoskeleton. Its subcellular location is the host cell junction. The protein resides in the host plasmodesma. In terms of biological role, transports viral genome to neighboring plant cells directly through plasmosdesmata, without any budding. The movement protein allows efficient cell to cell propagation, by bypassing the host cell wall barrier. Forms a ribonucleoprotein complex with viral RNA. Binds microtubules and modulates microtubule stability. Can bind double-stranded DNA. In Citrullus (Cucumber), this protein is Movement protein (MP).